The following is a 319-amino-acid chain: Ferrochelatase (319 aa).

Residues His-193 and Glu-274 each contribute to the Fe cation site.

The protein belongs to the ferrochelatase family.

The protein localises to the cytoplasm. The enzyme catalyses heme b + 2 H(+) = protoporphyrin IX + Fe(2+). The protein operates within porphyrin-containing compound metabolism; protoheme biosynthesis; protoheme from protoporphyrin-IX: step 1/1. In terms of biological role, catalyzes the ferrous insertion into protoporphyrin IX. This chain is Ferrochelatase, found in Actinobacillus pleuropneumoniae serotype 5b (strain L20).